We begin with the raw amino-acid sequence, 140 residues long: Actin-depolymerizing factor 10 (140 aa).

Phosphoserine is present on Ser-6. An ADF-H domain is found at 7–139 (GMHVSDECKL…SLDIIKGRVN (133 aa)).

This sequence belongs to the actin-binding proteins ADF family.

It localises to the cytoplasm. The protein localises to the cytoskeleton. Actin-depolymerizing protein. Severs actin filaments (F-actin) and binds to actin monomers. The chain is Actin-depolymerizing factor 10 (ADF10) from Arabidopsis thaliana (Mouse-ear cress).